The primary structure comprises 424 residues: Acetyl-CoA acetyltransferase, mitochondrial (424 aa).

A mitochondrion-targeting transit peptide spans M1 to Y30. K63 is modified (N6-acetyllysine; alternate). K63 bears the N6-succinyllysine; alternate mark. K75 carries the post-translational modification N6-succinyllysine. The active-site Acyl-thioester intermediate is C123. An N6-acetyllysine; alternate mark is found at K171, K178, K187, and K199. N6-succinyllysine; alternate occurs at positions 171, 178, 187, and 199. Phosphoserine is present on S204. A CoA-binding site is contributed by Y216. Y216 contacts K(+). Residues K220 and K227 each carry the N6-acetyllysine; alternate modification. Residues K220 and K227 each carry the N6-succinyllysine; alternate modification. Residue K240 is modified to N6-succinyllysine. K242 is subject to N6-acetyllysine; alternate. N6-succinyllysine; alternate is present on K242. K248 and K254 each carry N6-acetyllysine. Residues R255–D257 and K260 contribute to the CoA site. N6-acetyllysine; alternate is present on K260. K260 bears the N6-succinyllysine; alternate mark. An N6-succinyllysine mark is found at K263 and K265. At K270 the chain carries N6-acetyllysine. K(+)-binding residues include A277, A278, and A280. Residue S281 participates in CoA binding. The residue at position 335 (K335) is an N6-acetyllysine. V378 is a binding site for K(+). The active-site Proton donor/acceptor is the C410.

The protein belongs to the thiolase-like superfamily. Thiolase family. In terms of assembly, homotetramer. Succinylation at Lys-265, adjacent to a coenzyme A binding site. Desuccinylated by SIRT5.

Its subcellular location is the mitochondrion. The enzyme catalyses 2 acetyl-CoA = acetoacetyl-CoA + CoA. It catalyses the reaction propanoyl-CoA + acetyl-CoA = 2-methyl-3-oxobutanoyl-CoA + CoA. It participates in lipid metabolism; fatty acid beta-oxidation. Activated by potassium ions, but not sodium ions. This is one of the enzymes that catalyzes the last step of the mitochondrial beta-oxidation pathway, an aerobic process breaking down fatty acids into acetyl-CoA. Using free coenzyme A/CoA, catalyzes the thiolytic cleavage of medium- to long-chain 3-oxoacyl-CoAs into acetyl-CoA and a fatty acyl-CoA shortened by two carbon atoms. The activity of the enzyme is reversible and it can also catalyze the condensation of two acetyl-CoA molecules into acetoacetyl-CoA. Thereby, it plays a major role in ketone body metabolism. This chain is Acetyl-CoA acetyltransferase, mitochondrial (Acat1), found in Rattus norvegicus (Rat).